Reading from the N-terminus, the 537-residue chain is T-complex protein 1 subunit theta (537 aa).

It belongs to the TCP-1 chaperonin family. Heterooligomeric complex.

The protein resides in the cytoplasm. Its function is as follows. Molecular chaperone; assists the folding of proteins upon ATP hydrolysis. Known to play a role, in vitro, in the folding of actin and tubulin. In Dictyostelium discoideum (Social amoeba), this protein is T-complex protein 1 subunit theta (cct8).